A 219-amino-acid polypeptide reads, in one-letter code: Thiamine-phosphate synthase (219 aa).

4-amino-2-methyl-5-(diphosphooxymethyl)pyrimidine-binding positions include 45-49 (QYREK) and Asn-77. Residues Asp-78 and Asp-97 each contribute to the Mg(2+) site. Thr-116 contacts 4-amino-2-methyl-5-(diphosphooxymethyl)pyrimidine. 142 to 144 (SFT) lines the 2-[(2R,5Z)-2-carboxy-4-methylthiazol-5(2H)-ylidene]ethyl phosphate pocket. Residue Lys-145 participates in 4-amino-2-methyl-5-(diphosphooxymethyl)pyrimidine binding. Residues Gly-173 and 193 to 194 (VT) each bind 2-[(2R,5Z)-2-carboxy-4-methylthiazol-5(2H)-ylidene]ethyl phosphate.

This sequence belongs to the thiamine-phosphate synthase family. Mg(2+) is required as a cofactor.

It carries out the reaction 2-[(2R,5Z)-2-carboxy-4-methylthiazol-5(2H)-ylidene]ethyl phosphate + 4-amino-2-methyl-5-(diphosphooxymethyl)pyrimidine + 2 H(+) = thiamine phosphate + CO2 + diphosphate. The enzyme catalyses 2-(2-carboxy-4-methylthiazol-5-yl)ethyl phosphate + 4-amino-2-methyl-5-(diphosphooxymethyl)pyrimidine + 2 H(+) = thiamine phosphate + CO2 + diphosphate. It catalyses the reaction 4-methyl-5-(2-phosphooxyethyl)-thiazole + 4-amino-2-methyl-5-(diphosphooxymethyl)pyrimidine + H(+) = thiamine phosphate + diphosphate. It participates in cofactor biosynthesis; thiamine diphosphate biosynthesis; thiamine phosphate from 4-amino-2-methyl-5-diphosphomethylpyrimidine and 4-methyl-5-(2-phosphoethyl)-thiazole: step 1/1. Its function is as follows. Condenses 4-methyl-5-(beta-hydroxyethyl)thiazole monophosphate (THZ-P) and 2-methyl-4-amino-5-hydroxymethyl pyrimidine pyrophosphate (HMP-PP) to form thiamine monophosphate (TMP). This chain is Thiamine-phosphate synthase, found in Caldicellulosiruptor bescii (strain ATCC BAA-1888 / DSM 6725 / KCTC 15123 / Z-1320) (Anaerocellum thermophilum).